The following is a 443-amino-acid chain: 3-isopropylmalate dehydratase large subunit (443 aa).

Residues Cys-347, Cys-407, and Cys-410 each contribute to the [4Fe-4S] cluster site.

This sequence belongs to the aconitase/IPM isomerase family. LeuC type 1 subfamily. Heterodimer of LeuC and LeuD. The cofactor is [4Fe-4S] cluster.

It catalyses the reaction (2R,3S)-3-isopropylmalate = (2S)-2-isopropylmalate. It participates in amino-acid biosynthesis; L-leucine biosynthesis; L-leucine from 3-methyl-2-oxobutanoate: step 2/4. Functionally, catalyzes the isomerization between 2-isopropylmalate and 3-isopropylmalate, via the formation of 2-isopropylmaleate. This Buchnera aphidicola subsp. Uroleucon aeneum protein is 3-isopropylmalate dehydratase large subunit.